A 229-amino-acid polypeptide reads, in one-letter code: tRNA (guanine-N(7)-)-methyltransferase (229 aa).

S-adenosyl-L-methionine contacts are provided by Glu-59, Glu-84, Asp-111, and Asp-134. Residue Asp-134 is part of the active site. Substrate is bound by residues Lys-138, Asp-170, and 205–208; that span reads TKFE.

It belongs to the class I-like SAM-binding methyltransferase superfamily. TrmB family.

The catalysed reaction is guanosine(46) in tRNA + S-adenosyl-L-methionine = N(7)-methylguanosine(46) in tRNA + S-adenosyl-L-homocysteine. It participates in tRNA modification; N(7)-methylguanine-tRNA biosynthesis. Its function is as follows. Catalyzes the formation of N(7)-methylguanine at position 46 (m7G46) in tRNA. In Nitrosospira multiformis (strain ATCC 25196 / NCIMB 11849 / C 71), this protein is tRNA (guanine-N(7)-)-methyltransferase.